The chain runs to 384 residues: WAT1-related protein At4g08290 (384 aa).

10 helical membrane-spanning segments follow: residues 15 to 35, 43 to 63, 73 to 93, 104 to 124, 140 to 160, 186 to 206, 219 to 239, 255 to 275, 282 to 302, and 307 to 327; these read LLMI…MATL, VVIV…ALIF, LSVL…DQGF, TYTS…AWIL, IIGT…KGPL, WVVG…FYVL, SLSA…ALVV, FAPL…QGMV, VFVT…ASFI, and IHFG…MVVW. EamA domains lie at 25-154 and 198-326; these read AGTY…LVMT and VAWS…YMVV.

It belongs to the drug/metabolite transporter (DMT) superfamily. Plant drug/metabolite exporter (P-DME) (TC 2.A.7.4) family.

The protein localises to the membrane. This chain is WAT1-related protein At4g08290, found in Arabidopsis thaliana (Mouse-ear cress).